Here is a 139-residue protein sequence, read N- to C-terminus: Transcription antitermination protein NusB (139 aa).

Belongs to the NusB family.

Its function is as follows. Involved in transcription antitermination. Required for transcription of ribosomal RNA (rRNA) genes. Binds specifically to the boxA antiterminator sequence of the ribosomal RNA (rrn) operons. This is Transcription antitermination protein NusB from Escherichia fergusonii (strain ATCC 35469 / DSM 13698 / CCUG 18766 / IAM 14443 / JCM 21226 / LMG 7866 / NBRC 102419 / NCTC 12128 / CDC 0568-73).